We begin with the raw amino-acid sequence, 103 residues long: Small ribosomal subunit protein uS10 (103 aa).

Belongs to the universal ribosomal protein uS10 family. In terms of assembly, part of the 30S ribosomal subunit.

Its function is as follows. Involved in the binding of tRNA to the ribosomes. This is Small ribosomal subunit protein uS10 from Syntrophobacter fumaroxidans (strain DSM 10017 / MPOB).